Reading from the N-terminus, the 236-residue chain is Small ribosomal subunit protein uS3 (236 aa).

Positions 39–112 (IREFITKHPK…RINLKVEEVG (74 aa)) constitute a KH type-2 domain. The interval 212 to 236 (YGDDNDGADAQTGQASKKPKRSYKR) is disordered.

This sequence belongs to the universal ribosomal protein uS3 family. In terms of assembly, part of the 30S ribosomal subunit. Forms a tight complex with proteins S10 and S14.

Binds the lower part of the 30S subunit head. Binds mRNA in the 70S ribosome, positioning it for translation. The polypeptide is Small ribosomal subunit protein uS3 (Rhodopirellula baltica (strain DSM 10527 / NCIMB 13988 / SH1)).